The chain runs to 54 residues: Relaxin (54 aa).

Pyrrolidone carboxylic acid is present on Q1. Cystine bridges form between C10–C41, C22–C54, and C40–C45.

The protein belongs to the insulin family. Heterodimer of a B chain and an A chain linked by two disulfide bonds.

Its subcellular location is the secreted. Relaxin is an ovarian hormone that acts with estrogen to produce dilatation of the birth canal in many mammals. The protein is Relaxin of Balaenoptera edeni (Pigmy Bryde's whale).